The sequence spans 60 residues: Large ribosomal subunit protein bL32 (60 aa).

Positions 1 to 23 are disordered; the sequence is MAVPRNRHSNARKNIRRSHHAKQ.

The protein belongs to the bacterial ribosomal protein bL32 family.

The chain is Large ribosomal subunit protein bL32 from Chlamydia abortus (strain DSM 27085 / S26/3) (Chlamydophila abortus).